A 455-amino-acid chain; its full sequence is Transcription factor mokH (455 aa).

A disordered region spans residues 1–22 (MALSPVQDPPSHTDKTMPRRAF). The segment at residues 26-58 (CDRCHAQKIKCIGSEGAVARASCQRCQQAGLRC) is a DNA-binding region (zn(2)-C6 fungal-type). Disordered stretches follow at residues 68–113 (KLPK…DSSG) and 296–317 (LTPLEGHQFEPPPSSSRDRSSV). A compositionally biased stretch (polar residues) spans 75–88 (AESSPASSTAGLHT). Residues 89 to 113 (SSSDSSPPVPSDGLPLDLPGPDSSG) are compositionally biased toward low complexity.

Its subcellular location is the nucleus. Transcription factor that regulates the gene cluster that mediates the biosynthesis of monakolin K, also known as lovastatin, and which acts as a potent competitive inhibitor of HMG-CoA reductase. Monakolin K biosynthesis is performed in two stages. The first stage is catalyzed by the nonaketide synthase mokA, which belongs to type I polyketide synthases and catalyzes the iterative nine-step formation of the polyketide. This PKS stage is completed by the action of dehydrogenase mokE, which catalyzes the NADPH-dependent reduction of the unsaturated tetra-, penta- and heptaketide intermediates that arise during the mokA-mediated biosynthesis of the nonaketide chain and leads to dihydromonacolin L. Covalently bound dihydromonacolin L is released from mokA by the mokD esterase. Conversion of dihydromonacolin L into monacolin L and then monacolin J is subsequently performed with the participation of molecular oxygen and P450 monoogygenase mokC. Finally, mokF performs the conversion of monacoline J to monacoline K through the addition of the side-chain diketide moiety (2R)-2-methylbutanoate produced by the diketide synthase mokB. HMG-CoA reductase mokG may act as a down-regulator of monacolin K production. The polypeptide is Transcription factor mokH (Monascus pilosus (Red mold)).